A 53-amino-acid chain; its full sequence is Small ribosomal subunit protein uS14m (53 aa).

It belongs to the universal ribosomal protein uS14 family.

It localises to the mitochondrion. In Bigelowiella natans (Pedinomonas minutissima), this protein is Small ribosomal subunit protein uS14m (RPS14).